We begin with the raw amino-acid sequence, 286 residues long: Master replication protein (286 aa).

Residues 2 to 96 (ARQVICWCFT…LEGPWEYGEF (95 aa)) enclose the CRESS-DNA virus Rep endonuclease domain. Positions 9–12 (CFTL) match the RCR-1 motif. 2 residues coordinate a divalent metal cation: Glu33 and His41. The RCR-2 signature appears at 41-43 (HFQ). A Nuclear localization signal motif is present at residues 50–70 (KRTSLAGMKKLIPGAHFEKRR). Tyr79 (for DNA cleavage activity) is an active-site residue. An RCR-3 motif is present at residues 79–82 (YSMK). Asp84 is an a divalent metal cation binding site. Residues 96-102 (FVPTIED) carry the Nuclear localization signal motif. Residue 186 to 188 (GKT) participates in ATP binding.

Belongs to the nanoviridea/circoviridae replication-associated protein family. As to quaternary structure, homooligomer (Potential). Rep binds to repeated DNA motifs (iterons). The cofactor is Mg(2+). Mn(2+) is required as a cofactor.

The protein resides in the host nucleus. The enzyme catalyses ATP + H2O = ADP + phosphate + H(+). Functionally, essential for the replication of all genomic viral ssDNA (trans-replication). The closed circular ssDNA genome is first converted to a superhelical dsDNA. Rep binds a specific hairpin at the genome origin of replication. Introduces an endonucleolytic nick within the conserved sequence 5'-A[GT]TATTAC-3' in the intergenic region of the genome, thereby initiating the rolling circle replication (RCR). Following cleavage, binds covalently to the 5'-phosphate of DNA as a tyrosyl ester. The cleavage gives rise to a free 3'-OH that serves as a primer for the cellular DNA polymerase. The polymerase synthesizes the (+) strand DNA by rolling circle mechanism. After one round of replication, a Rep-catalyzed nucleotidyl transfer reaction releases a circular single-stranded virus genome, thereby terminating the replication. Displays origin-specific DNA cleavage, nucleotidyl transferase, ATPase and helicase activities. This is Master replication protein (DNA-R) from Cicer arietinum (Chickpea).